A 341-amino-acid polypeptide reads, in one-letter code: MFSLPLHQSKLIFLLSFLLIKTLNAQPTYLLSYCYTSGNYTPNSSYKSNLDTLISVLDSQSSNKGFYSYASGSSPTTTVYGSYLCRGDISSSTCETCISRASKNVFIWCPVQKEAIIWYEECFLRYSSRKIFSILDQGPFVTWTSYDTTLYQFYFINTVEYRMDRLIQEAYSSSSYFAEETYHVSYLGEVYDLNGLVQCTPDLNQYDCYRCLKSAYNETKDCCYGKRFALVYSSNCMLTYKATFLAPPPPPPPPPPPPPPPQRLYGENDTPSSDESFSFKLGKVFRRIIAPVIAAVVIILVISVCSLCCCCIKKKKKANQREASIEIPTLNTGENLTVDHQ.

Residues methionine 1 to alanine 25 form the signal peptide. 2 Gnk2-homologous domains span residues threonine 28–isoleucine 131 and aspartate 136–leucine 245. 4 disulfides stabilise this stretch: cysteine 85–cysteine 94, cysteine 97–cysteine 122, cysteine 199–cysteine 208, and cysteine 211–cysteine 236. Positions proline 247–glutamine 262 are enriched in pro residues. The segment at proline 247–aspartate 274 is disordered.

Belongs to the cysteine-rich repeat secretory protein family.

The protein resides in the secreted. This Arabidopsis thaliana (Mouse-ear cress) protein is Cysteine-rich repeat secretory protein 1 (CRRSP1).